The primary structure comprises 430 residues: Adenylosuccinate synthetase (430 aa).

Residues 12–18 (GDEGKGK) and 40–42 (GHT) contribute to the GTP site. D13 (proton acceptor) is an active-site residue. Mg(2+) is bound by residues D13 and G40. IMP contacts are provided by residues 13–16 (DEGK), 38–41 (NAGH), T128, R142, Q223, T238, and R302. The active-site Proton donor is the H41. 298–304 (TTTGRPR) provides a ligand contact to substrate. Residues R304, 330–332 (SID), and 412–414 (SVG) each bind GTP.

The protein belongs to the adenylosuccinate synthetase family. As to quaternary structure, homodimer. The cofactor is Mg(2+).

The protein localises to the cytoplasm. It carries out the reaction IMP + L-aspartate + GTP = N(6)-(1,2-dicarboxyethyl)-AMP + GDP + phosphate + 2 H(+). It participates in purine metabolism; AMP biosynthesis via de novo pathway; AMP from IMP: step 1/2. Its function is as follows. Plays an important role in the de novo pathway of purine nucleotide biosynthesis. Catalyzes the first committed step in the biosynthesis of AMP from IMP. The sequence is that of Adenylosuccinate synthetase from Streptococcus pyogenes serotype M4 (strain MGAS10750).